A 366-amino-acid chain; its full sequence is Ribosomal RNA large subunit methyltransferase M (366 aa).

S-adenosyl-L-methionine contacts are provided by residues Ser188, Cys221–Gly224, Asp240, Asp260, and Asp277. Lys306 acts as the Proton acceptor in catalysis.

It belongs to the class I-like SAM-binding methyltransferase superfamily. RNA methyltransferase RlmE family. RlmM subfamily. As to quaternary structure, monomer.

The protein localises to the cytoplasm. It catalyses the reaction cytidine(2498) in 23S rRNA + S-adenosyl-L-methionine = 2'-O-methylcytidine(2498) in 23S rRNA + S-adenosyl-L-homocysteine + H(+). Catalyzes the 2'-O-methylation at nucleotide C2498 in 23S rRNA. The protein is Ribosomal RNA large subunit methyltransferase M of Cronobacter sakazakii (strain ATCC BAA-894) (Enterobacter sakazakii).